The sequence spans 163 residues: Large ribosomal subunit protein uL15 (163 aa).

Residues 1–43 (MKLNEIADNEGSRKKRTRVGRGIGSGKGKQSGRGGKGQTARSG) are disordered. Over residues 21–37 (RGIGSGKGKQSGRGGKG) the composition is skewed to gly residues.

Belongs to the universal ribosomal protein uL15 family. As to quaternary structure, part of the 50S ribosomal subunit.

Functionally, binds to the 23S rRNA. This chain is Large ribosomal subunit protein uL15, found in Afipia carboxidovorans (strain ATCC 49405 / DSM 1227 / KCTC 32145 / OM5) (Oligotropha carboxidovorans).